Consider the following 297-residue polypeptide: MEDYTKIEKIGEGTYGVVYKGRHKTTGQVVAMKKIRLESEEEGVPSTAIREISLLKELRHPNIVSLQDVLMQDSRLYLIFEFLSMDLKKYLDSIPPGQYMDSSLVKSYLYQILQGIVFCHSRRVLHRDLKPQNLLIDDKGTIKLADFGLARAFGIPIRVYTHEVVTLWYRSPEVLLGSARYSTPVDIWSIGTIFAELATKKPLFHGDSEIDQLFRIFRALGTPNNEVWPEVESLQDYKNTFPKWKPGSLASHVKNLDENGLDLLSKMLIYDPAKRISGKMALNHPYFNDLDNQIKKM.

Residue Met-1 is modified to N-acetylmethionine. Tyr-4 is subject to Phosphotyrosine; by PKR. The 284-residue stretch at 4-287 (YTKIEKIGEG…GKMALNHPYF (284 aa)) folds into the Protein kinase domain. Lys-6 and Lys-9 each carry N6-acetyllysine; alternate. Residues Lys-6 and Lys-9 each participate in a glycyl lysine isopeptide (Lys-Gly) (interchain with G-Cter in SUMO2); alternate cross-link. 10–18 (IGEGTYGVV) serves as a coordination point for ATP. Thr-14 is modified (phosphothreonine; by PKMYT1). Tyr-15 carries the phosphotyrosine; by PKMYT1, WEE1, WEE2 and PKC/PRKCD modification. Phosphotyrosine is present on Tyr-19. Residue Lys-20 forms a Glycyl lysine isopeptide (Lys-Gly) (interchain with G-Cter in SUMO2) linkage. Lys-33 serves as a coordination point for ATP. The residue at position 39 (Ser-39) is a Phosphoserine. Tyr-77 is modified (phosphotyrosine). The active-site Proton acceptor is Asp-128. Lys-139 is covalently cross-linked (Glycyl lysine isopeptide (Lys-Gly) (interchain with G-Cter in SUMO2)). Position 141 is a phosphothreonine (Thr-141). Position 161 is a phosphothreonine; by CAK (Thr-161). Ser-178 bears the Phosphoserine mark. Thr-222 is modified (phosphothreonine). Residue Lys-245 is modified to N6-succinyllysine. Phosphoserine is present on Ser-248.

This sequence belongs to the protein kinase superfamily. CMGC Ser/Thr protein kinase family. CDC2/CDKX subfamily. In terms of assembly, forms a stable but non-covalent complex with a regulatory subunit and with a cyclin. The cyclin subunit imparts substrate specificity to the complex. Interacts with cyclins-B (CCNB1, CCNB2 and CCNB3) to form a serine/threonine kinase holoenzyme complex also known as maturation promoting factor (MPF). Promotes G2-M transition when in complex with a cyclin-B. Can also form CDK1-cylin-D and CDK1-cyclin-E complexes that phosphorylate RB1 in vitro. Associates with cyclins-A and B1 during S-phase in regenerating hepatocytes. Interacts with DLGAP5. Binds to the CDK inhibitors CDKN1A/p21 and CDKN1B/p27. Interacts with catalytically active CCNB1 and RALBP1 during mitosis to form an endocytotic complex during interphase. Interacts with FANCC. Interacts with CEP63; this interaction recruits CDK1 to centrosomes. Interacts with CENPA. Interacts with NR1D1. Interacts with proteasome subunit PSMA8; to participate in meiosis progression during spermatogenesis. As to quaternary structure, unable to complex with cyclin-B1 and also fails to bind to CDKN1A/p21. (Microbial infection) Interacts with severe fever with thrombocytopenia syndrome virus (SFTSV) NSs; this interaction is inclusion body dependent, it inhibits the formation and nuclear import of the cyclin B1-CDK1 complex and leads to cell cycle arrest. Post-translationally, phosphorylation at Thr-161 by CAK/CDK7 activates kinase activity. Phosphorylation at Thr-14 and Tyr-15 by PKMYT1 prevents nuclear translocation. Phosphorylation at Tyr-15 by WEE1 and WEE2 inhibits the protein kinase activity and acts as a negative regulator of entry into mitosis (G2 to M transition). Phosphorylation by PKMYT1 and WEE1 takes place during mitosis to keep CDK1-cyclin-B complexes inactive until the end of G2. By the end of G2, PKMYT1 and WEE1 are inactivated, but CDC25A and CDC25B are activated. Dephosphorylation by active CDC25A and CDC25B at Thr-14 and Tyr-15, leads to CDK1 activation at the G2-M transition. Phosphorylation at Tyr-15 by WEE2 during oogenesis is required to maintain meiotic arrest in oocytes during the germinal vesicle (GV) stage, a long period of quiescence at dictyate prophase I, leading to prevent meiotic reentry. Phosphorylation by WEE2 is also required for metaphase II exit during egg activation to ensure exit from meiosis in oocytes and promote pronuclear formation. Phosphorylated at Tyr-4 by PKR/EIF2AK2 upon genotoxic stress. This phosphorylation triggers CDK1 polyubiquitination and subsequent proteolysis, thus leading to G2 arrest. In response to UV irradiation, phosphorylation at Tyr-15 by PRKCD activates the G2/M DNA damage checkpoint. Polyubiquitinated upon genotoxic stress. As to expression, found in breast cancer tissues.

Its subcellular location is the nucleus. The protein localises to the cytoplasm. It is found in the mitochondrion. The protein resides in the cytoskeleton. It localises to the microtubule organizing center. Its subcellular location is the centrosome. The protein localises to the spindle. The enzyme catalyses L-seryl-[protein] + ATP = O-phospho-L-seryl-[protein] + ADP + H(+). It carries out the reaction L-threonyl-[protein] + ATP = O-phospho-L-threonyl-[protein] + ADP + H(+). It catalyses the reaction [DNA-directed RNA polymerase] + ATP = phospho-[DNA-directed RNA polymerase] + ADP + H(+). Its activity is regulated as follows. Phosphorylation at Thr-14 or Tyr-15 inactivates the enzyme, while phosphorylation at Thr-161 activates it. Activated through a multistep process; binding to cyclin-B is required for relocation of cyclin-kinase complexes to the nucleus, activated by CAK/CDK7-mediated phosphorylation on Thr-161, and CDC25-mediated dephosphorylation of inhibitory phosphorylation on Thr-14 and Tyr-15. Activity is restricted during S-phase in an ATR-dependent manner to prevent premature entry into G2. Repressed by the CDK inhibitors CDKN1A/p21 and CDKN1B/p27 during the G1 phase and by CDKN1A/p21 at the G1-S checkpoint upon DNA damage. Transient activation by rapid and transient dephosphorylation at Tyr-15 triggered by TGFB1. Inhibited by flavopiridol and derivatives, pyrimidine derivatives, pyridine derivatives, purine derivatives, staurosporine, paullones, oxoindoles, indazole analogs, indolin-2-ones, pyrazolo[3,4-b]pyridines, imidazo[1,2-a]pyridine (AZ703), thiazolinone analogs(RO-3306), thiazol urea, macrocyclic quinoxalin-2-one, pyrrolo[2,3-a]carbazole, pyrazolo[1,5-a]-1,3,5-triazine, pyrazolo[1,5-a]pyrimidine (Dinaciclib, SCH 727965), 2-(1-ethyl-2-hydroxyethylamino)-6-benzylamino-9-isopropylpurine (roscovitine), olomoucine, AG-024322, AT-7519, P276-00, R547/Ro-4584820 and SNS-032/BMS-387032. In terms of biological role, plays a key role in the control of the eukaryotic cell cycle by modulating the centrosome cycle as well as mitotic onset; promotes G2-M transition via association with multiple interphase cyclins. Phosphorylates PARVA/actopaxin, APC, AMPH, APC, BARD1, Bcl-xL/BCL2L1, BRCA2, CALD1, CASP8, CDC7, CDC20, CDC25A, CDC25C, CC2D1A, CENPA, CSNK2 proteins/CKII, FZR1/CDH1, CDK7, CEBPB, CHAMP1, DMD/dystrophin, EEF1 proteins/EF-1, EZH2, KIF11/EG5, EGFR, FANCG, FOS, GFAP, GOLGA2/GM130, GRASP1, UBE2A/hHR6A, HIST1H1 proteins/histone H1, HMGA1, HIVEP3/KRC, KAT5, LMNA, LMNB, LBR, MKI67, LATS1, MAP1B, MAP4, MARCKS, MCM2, MCM4, MKLP1, MLST8, MYB, NEFH, NFIC, NPC/nuclear pore complex, PITPNM1/NIR2, NPM1, NCL, NUCKS1, NPM1/numatrin, ORC1, PRKAR2A, EEF1E1/p18, EIF3F/p47, p53/TP53, NONO/p54NRB, PAPOLA, PLEC/plectin, RB1, TPPP, UL40/R2, RAB4A, RAP1GAP, RBBP8/CtIP, RCC1, RPS6KB1/S6K1, KHDRBS1/SAM68, ESPL1, SKI, BIRC5/survivin, STIP1, TEX14, beta-tubulins, MAPT/TAU, NEDD1, VIM/vimentin, TK1, FOXO1, RUNX1/AML1, SAMHD1, SIRT2, CGAS and RUNX2. CDK1/CDC2-cyclin-B controls pronuclear union in interphase fertilized eggs. Essential for early stages of embryonic development. During G2 and early mitosis, CDC25A/B/C-mediated dephosphorylation activates CDK1/cyclin complexes which phosphorylate several substrates that trigger at least centrosome separation, Golgi dynamics, nuclear envelope breakdown and chromosome condensation. Once chromosomes are condensed and aligned at the metaphase plate, CDK1 activity is switched off by WEE1- and PKMYT1-mediated phosphorylation to allow sister chromatid separation, chromosome decondensation, reformation of the nuclear envelope and cytokinesis. Phosphorylates KRT5 during prometaphase and metaphase. Inactivated by PKR/EIF2AK2- and WEE1-mediated phosphorylation upon DNA damage to stop cell cycle and genome replication at the G2 checkpoint thus facilitating DNA repair. Reactivated after successful DNA repair through WIP1-dependent signaling leading to CDC25A/B/C-mediated dephosphorylation and restoring cell cycle progression. Catalyzes lamin (LMNA, LMNB1 and LMNB2) phosphorylation at the onset of mitosis, promoting nuclear envelope breakdown. In proliferating cells, CDK1-mediated FOXO1 phosphorylation at the G2-M phase represses FOXO1 interaction with 14-3-3 proteins and thereby promotes FOXO1 nuclear accumulation and transcription factor activity, leading to cell death of postmitotic neurons. The phosphorylation of beta-tubulins regulates microtubule dynamics during mitosis. NEDD1 phosphorylation promotes PLK1-mediated NEDD1 phosphorylation and subsequent targeting of the gamma-tubulin ring complex (gTuRC) to the centrosome, an important step for spindle formation. In addition, CC2D1A phosphorylation regulates CC2D1A spindle pole localization and association with SCC1/RAD21 and centriole cohesion during mitosis. The phosphorylation of Bcl-xL/BCL2L1 after prolongated G2 arrest upon DNA damage triggers apoptosis. In contrast, CASP8 phosphorylation during mitosis prevents its activation by proteolysis and subsequent apoptosis. This phosphorylation occurs in cancer cell lines, as well as in primary breast tissues and lymphocytes. EZH2 phosphorylation promotes H3K27me3 maintenance and epigenetic gene silencing. CALD1 phosphorylation promotes Schwann cell migration during peripheral nerve regeneration. CDK1-cyclin-B complex phosphorylates NCKAP5L and mediates its dissociation from centrosomes during mitosis. Regulates the amplitude of the cyclic expression of the core clock gene BMAL1 by phosphorylating its transcriptional repressor NR1D1, and this phosphorylation is necessary for SCF(FBXW7)-mediated ubiquitination and proteasomal degradation of NR1D1. Phosphorylates EML3 at 'Thr-881' which is essential for its interaction with HAUS augmin-like complex and TUBG1. Phosphorylates CGAS during mitosis, leading to its inhibition, thereby preventing CGAS activation by self DNA during mitosis. Phosphorylates SKA3 on multiple sites during mitosis which promotes SKA3 binding to the NDC80 complex and anchoring of the SKA complex to kinetochores, to enable stable attachment of mitotic spindle microtubules to kinetochores. Functionally, (Microbial infection) Acts as a receptor for hepatitis C virus (HCV) in hepatocytes and facilitates its cell entry. The polypeptide is Cyclin-dependent kinase 1 (CDK1) (Homo sapiens (Human)).